A 369-amino-acid polypeptide reads, in one-letter code: Anhydro-N-acetylmuramic acid kinase (369 aa).

An ATP-binding site is contributed by 12 to 19; it reads GTSMDGVD.

This sequence belongs to the anhydro-N-acetylmuramic acid kinase family.

It carries out the reaction 1,6-anhydro-N-acetyl-beta-muramate + ATP + H2O = N-acetyl-D-muramate 6-phosphate + ADP + H(+). The protein operates within amino-sugar metabolism; 1,6-anhydro-N-acetylmuramate degradation. Its pathway is cell wall biogenesis; peptidoglycan recycling. Its function is as follows. Catalyzes the specific phosphorylation of 1,6-anhydro-N-acetylmuramic acid (anhMurNAc) with the simultaneous cleavage of the 1,6-anhydro ring, generating MurNAc-6-P. Is required for the utilization of anhMurNAc either imported from the medium or derived from its own cell wall murein, and thus plays a role in cell wall recycling. This chain is Anhydro-N-acetylmuramic acid kinase, found in Shewanella sp. (strain MR-7).